Reading from the N-terminus, the 176-residue chain is MPVKRSLKLDDQFEKNSFSPSKIVRKKSITAYSPTTGTYQLSPFSSPATPKEQEHRNGPSNETRKRSNLSSPVRQESTVKDRDGFMVLLSKIEISSEKTMEIMKNLSSIQALEGNRQLEDLIGVSLVPCSLKSEARKTKELMTKVIKQKLFEKKKSRITPKDHHLDSFEFLKAILN.

Residue K8 forms a Glycyl lysine isopeptide (Lys-Gly) (interchain with G-Cter in SUMO2) linkage. A Phosphoserine modification is found at S17. Positions 20 to 50 are DD1; sequence PSKIVRKKSITAYSPTTGTYQLSPFSSPATP. A Glycyl lysine isopeptide (Lys-Gly) (interchain with G-Cter in SUMO2) cross-link involves residue K22. S28 is subject to Phosphoserine. The segment covering 34–48 has biased composition (polar residues); sequence PTTGTYQLSPFSSPA. Positions 34–78 are disordered; it reads PTTGTYQLSPFSSPATPKEQEHRNGPSNETRKRSNLSSPVRQEST. Positions 51 to 65 are enriched in basic and acidic residues; the sequence is KEQEHRNGPSNETRK. The Nuclear localization signal motif lies at 63–66; that stretch reads TRKR. At S71 the chain carries Phosphoserine. Positions 82 to 112 form a coiled coil; it reads RDGFMVLLSKIEISSEKTMEIMKNLSSIQAL. The LXXIL motif signature appears at 171–175; the sequence is LKAIL.

Homodimer; mediated by the coiled coil domain. Interacts with CCNA2 and MTA1. Interacts with NFKB1 NF-kappa-B subunit. Component of the CENPA-CAD complex, composed of CENPI, CENPK, CENPL, CENPO, CENPP, CENPQ, CENPR and CENPS. The CENPA-CAD complex interacts with the CENPA-NAC complex, at least composed of CENPA, CENPC, CENPH, CENPM, CENPN, CENPT and CENPU. Interacts with TASOR. Expressed in the spermatogonia and spermatocytes.

It is found in the nucleus. It localises to the chromosome. The protein localises to the centromere. Its subcellular location is the kinetochore. Functionally, transcription coregulator that can have both coactivator and corepressor functions. Involved in the coactivation of nuclear receptors for retinoid X (RXRs) and thyroid hormone (TRs) in a ligand-dependent fashion. In contrast, it does not coactivate nuclear receptors for retinoic acid, vitamin D, progesterone receptor, nor glucocorticoid. Acts as a coactivator for estrogen receptor alpha. Acts as a transcriptional corepressor via its interaction with the NFKB1 NF-kappa-B subunit, possibly by interfering with the transactivation domain of NFKB1. Induces apoptosis in breast cancer cells, but not in other cancer cells, via a caspase-2 mediated pathway that involves mitochondrial membrane permeabilization but does not require other caspases. May also act as an inhibitor of cyclin A-associated kinase. Also acts a component of the CENPA-CAD (nucleosome distal) complex, a complex recruited to centromeres which is involved in assembly of kinetochore proteins, mitotic progression and chromosome segregation. May be involved in incorporation of newly synthesized CENPA into centromeres via its interaction with the CENPA-NAC complex. The polypeptide is Centromere protein R (Itgb3bp) (Mus musculus (Mouse)).